A 115-amino-acid chain; its full sequence is Delta-hexatoxin-Hi1a (115 aa).

The signal sequence occupies residues 1 to 18 (MKVIATLYGLLFLTVVLG). Residues 19 to 73 (DITEGNENDLVENFREELSEADIPLLKKLEAIEDALLEKDFLPYEEEDRNARPKR) constitute a propeptide that is removed on maturation. Intrachain disulfides connect Cys74–Cys88, Cys81–Cys93, Cys87–Cys104, and Cys89–Cys115.

Belongs to the neurotoxin 06 (delta-actx) family. Expressed by the venom gland.

The protein resides in the secreted. In terms of biological role, neurotoxin that slows inactivation of voltage-gated sodium channels (Nav). In vivo, is lethal to both vertebrates and insects. The protein is Delta-hexatoxin-Hi1a of Hadronyche infensa (Fraser island funnel-web spider).